Here is a 172-residue protein sequence, read N- to C-terminus: 3-hydroxydecanoyl-[acyl-carrier-protein] dehydratase (172 aa).

Residue H71 is part of the active site.

It belongs to the thioester dehydratase family. FabA subfamily. Homodimer.

The protein resides in the cytoplasm. The catalysed reaction is a (3R)-hydroxyacyl-[ACP] = a (2E)-enoyl-[ACP] + H2O. The enzyme catalyses (3R)-hydroxydecanoyl-[ACP] = (2E)-decenoyl-[ACP] + H2O. It catalyses the reaction (2E)-decenoyl-[ACP] = (3Z)-decenoyl-[ACP]. It functions in the pathway lipid metabolism; fatty acid biosynthesis. Necessary for the introduction of cis unsaturation into fatty acids. Catalyzes the dehydration of (3R)-3-hydroxydecanoyl-ACP to E-(2)-decenoyl-ACP and then its isomerization to Z-(3)-decenoyl-ACP. Can catalyze the dehydratase reaction for beta-hydroxyacyl-ACPs with saturated chain lengths up to 16:0, being most active on intermediate chain length. This is 3-hydroxydecanoyl-[acyl-carrier-protein] dehydratase from Salmonella arizonae (strain ATCC BAA-731 / CDC346-86 / RSK2980).